We begin with the raw amino-acid sequence, 329 residues long: Sex comb on midleg-like protein 1 (329 aa).

Residues 136-160 (SYSPTLPVSRRENNSPSNLPRPSFC) are disordered. A phosphoserine mark is found at Ser138 and Ser238. One can recognise an SAM domain in the interval 258–325 (WSVEAVVLFL…YYIDRLKQGK (68 aa)).

It belongs to the SCM family.

It is found in the nucleus. Putative Polycomb group (PcG) protein. PcG proteins act by forming multiprotein complexes, which are required to maintain the transcriptionally repressive state of homeotic genes throughout development. May be involved in spermatogenesis during sexual maturation. The protein is Sex comb on midleg-like protein 1 (SCML1) of Pongo pygmaeus (Bornean orangutan).